A 134-amino-acid chain; its full sequence is Methylglyoxal synthase (134 aa).

Residues Met1–Lys134 form the MGS-like domain. Residues His11, Lys15, and Thr37–Thr40 contribute to the substrate site. Asp63 serves as the catalytic Proton donor/acceptor. Residue His90 coordinates substrate.

Belongs to the methylglyoxal synthase family.

It carries out the reaction dihydroxyacetone phosphate = methylglyoxal + phosphate. Functionally, catalyzes the formation of methylglyoxal from dihydroxyacetone phosphate. The protein is Methylglyoxal synthase of Thermoanaerobacterium thermosaccharolyticum (Clostridium thermosaccharolyticum).